Reading from the N-terminus, the 379-residue chain is Cytochrome b (379 aa).

4 helical membrane-spanning segments follow: residues 33–53 (FGSLLGACLIIQILTGLFLAM), 77–98 (WLIRYLHANGASMFFICLSIHA), 113–133 (WNIGIILFLTTMATAFVGYVL), and 178–198 (FFAFHFILPFIITAFVLVHLL). Heme b is bound by residues His83 and His97. Heme b-binding residues include His182 and His196. His201 is an a ubiquinone binding site. 4 helical membrane-spanning segments follow: residues 226–246 (IKDLLGVFLLLLALMILALFF), 288–308 (LGGVLALILSILILAAFPLLN), 320–340 (ITQTIYWIFIANLLVLTWIGG), and 347–367 (FTMIGQIASITYFAIILILMP).

The protein belongs to the cytochrome b family. In terms of assembly, the cytochrome bc1 complex contains 11 subunits: 3 respiratory subunits (MT-CYB, CYC1 and UQCRFS1), 2 core proteins (UQCRC1 and UQCRC2) and 6 low-molecular weight proteins (UQCRH/QCR6, UQCRB/QCR7, UQCRQ/QCR8, UQCR10/QCR9, UQCR11/QCR10 and a cleavage product of UQCRFS1). This cytochrome bc1 complex then forms a dimer. It depends on heme b as a cofactor.

The protein resides in the mitochondrion inner membrane. In terms of biological role, component of the ubiquinol-cytochrome c reductase complex (complex III or cytochrome b-c1 complex) that is part of the mitochondrial respiratory chain. The b-c1 complex mediates electron transfer from ubiquinol to cytochrome c. Contributes to the generation of a proton gradient across the mitochondrial membrane that is then used for ATP synthesis. This chain is Cytochrome b (MT-CYB), found in Thaptomys nigrita (Blackish grass mouse).